The following is a 271-amino-acid chain: Peroxiredoxin-4 (271 aa).

Residues M1–G37 form the signal peptide. One can recognise a Thioredoxin domain in the interval A79–Y237. C124 serves as the catalytic Cysteine sulfenic acid (-SOH) intermediate.

Belongs to the peroxiredoxin family. AhpC/Prx1 subfamily. In terms of assembly, homodimer; disulfide-linked, upon oxidation. 5 homodimers assemble to form a ring-like decamer. Can form heterodimers with PRDX1. Post-translationally, the enzyme can be inactivated by further oxidation of the cysteine sulfenic acid (C(P)-SOH) to sulphinic acid (C(P)-SO2H) and sulphonic acid (C(P)-SO3H) instead of its condensation to a disulfide bond.

The protein localises to the cytoplasm. It localises to the endoplasmic reticulum. The catalysed reaction is a hydroperoxide + [thioredoxin]-dithiol = an alcohol + [thioredoxin]-disulfide + H2O. Its function is as follows. Thiol-specific peroxidase that catalyzes the reduction of hydrogen peroxide and organic hydroperoxides to water and alcohols, respectively. Plays a role in cell protection against oxidative stress by detoxifying peroxides and as sensor of hydrogen peroxide-mediated signaling events. Regulates the activation of NF-kappa-B in the cytosol by a modulation of I-kappa-B-alpha phosphorylation. The protein is Peroxiredoxin-4 (PRDX4) of Homo sapiens (Human).